The following is a 198-amino-acid chain: Ribose 1,5-bisphosphate phosphokinase PhnN (198 aa).

Glycine 25 to aspartate 32 is an ATP binding site.

The protein belongs to the ribose 1,5-bisphosphokinase family.

It carries out the reaction alpha-D-ribose 1,5-bisphosphate + ATP = 5-phospho-alpha-D-ribose 1-diphosphate + ADP. The protein operates within metabolic intermediate biosynthesis; 5-phospho-alpha-D-ribose 1-diphosphate biosynthesis; 5-phospho-alpha-D-ribose 1-diphosphate from D-ribose 5-phosphate (route II): step 3/3. In terms of biological role, catalyzes the phosphorylation of ribose 1,5-bisphosphate to 5-phospho-D-ribosyl alpha-1-diphosphate (PRPP). In Bradyrhizobium diazoefficiens (strain JCM 10833 / BCRC 13528 / IAM 13628 / NBRC 14792 / USDA 110), this protein is Ribose 1,5-bisphosphate phosphokinase PhnN.